The chain runs to 116 residues: Putative iron-sulfur cluster insertion protein ErpA (116 aa).

Residues Cys44, Cys108, and Cys110 each contribute to the iron-sulfur cluster site.

It belongs to the HesB/IscA family. In terms of assembly, homodimer. Iron-sulfur cluster is required as a cofactor.

Required for insertion of 4Fe-4S clusters. This Azoarcus sp. (strain BH72) protein is Putative iron-sulfur cluster insertion protein ErpA.